We begin with the raw amino-acid sequence, 332 residues long: tRNA U34 carboxymethyltransferase (332 aa).

Carboxy-S-adenosyl-L-methionine is bound by residues Lys96, Trp110, Lys115, Gly135, 186 to 187 (LE), Met204, Tyr208, and Arg323.

Belongs to the class I-like SAM-binding methyltransferase superfamily. CmoB family. In terms of assembly, homotetramer.

The enzyme catalyses carboxy-S-adenosyl-L-methionine + 5-hydroxyuridine(34) in tRNA = 5-carboxymethoxyuridine(34) in tRNA + S-adenosyl-L-homocysteine + H(+). In terms of biological role, catalyzes carboxymethyl transfer from carboxy-S-adenosyl-L-methionine (Cx-SAM) to 5-hydroxyuridine (ho5U) to form 5-carboxymethoxyuridine (cmo5U) at position 34 in tRNAs. The sequence is that of tRNA U34 carboxymethyltransferase from Hydrogenovibrio crunogenus (strain DSM 25203 / XCL-2) (Thiomicrospira crunogena).